A 353-amino-acid polypeptide reads, in one-letter code: MSEPLKPRIDFEQPLQSLDEPVLKSAQAFDEQAAEKFYPAAPELDAEDEEGRVEGLVNAALKPKRSLWRKMVTAGMVILGASVIAQSVQWVNQAWQQQDWIALGATTAGGLIILAGVGSVVTEWRRLYHLRQRAEERDIARALLVSHGVGQGRVFCEKLARQAGLDQGHPALQRWLASLHETHNDREVVELYAKLVQPALDNQARAEISRYAAESALMIAVSPLALVDMAFIAWRNIRLINRIAALYGIELGYFSRIRLFRLVLLNIAFAGASELVREVGMDWLSQDLAARLSARAAQGIGAGLLTARLGIKAMELCRPLPWLEGDKPKLGDFRRQLMNQLKNTLPKKDKTAH.

3 consecutive transmembrane segments (helical) span residues Met-71 to Val-91, Ile-101 to Val-121, and Glu-214 to Trp-234.

This sequence belongs to the UPF0283 family.

It localises to the cell inner membrane. The sequence is that of UPF0283 membrane protein YPTS_2342 from Yersinia pseudotuberculosis serotype IB (strain PB1/+).